The chain runs to 260 residues: Recombination-promoting nuclease RpnD (260 aa).

It belongs to the Rpn/YhgA-like nuclease family.

A low activity DNA endonuclease probably yielding 3'-hydroxyl ends. Involved in RecA-independent recombination and horizontal gene transfer. This chain is Recombination-promoting nuclease RpnD (rpnD), found in Escherichia coli O157:H7.